The chain runs to 124 residues: MRFSIATVVLSLAAMVVAIPTTESTLFARGGGQTCAQGQTLSCCQSVTSGGDGILGNLLGLNCAEIPIPIVGIVLGGKCNSAPVCCNVNGGSTSPDCDDNSNNGGTQGGINVLTNSCVAIPIVL.

A signal peptide spans 1-18; sequence MRFSIATVVLSLAAMVVA. Intrachain disulfides connect cysteine 35–cysteine 85, cysteine 43–cysteine 79, cysteine 44–cysteine 63, and cysteine 86–cysteine 97.

This sequence belongs to the fungal hydrophobin family.

Its subcellular location is the secreted. It is found in the cell wall. Aerial growth, conidiation, and dispersal of filamentous fungi in the environment rely upon a capability of their secreting small amphipathic proteins called hydrophobins (HPBs) with low sequence identity. Class I can self-assemble into an outermost layer of rodlet bundles on aerial cell surfaces, conferring cellular hydrophobicity that supports fungal growth, development and dispersal; whereas Class II form highly ordered films at water-air interfaces through intermolecular interactions but contribute nothing to the rodlet structure. In Botryotinia fuckeliana, hydrophobins are not involved in conferring surface hydrophobicity to conidia and aerial hyphae and their function in sclerotia and fruiting bodies remains to be investigated. The chain is Class I hydrophobin 1 (Bhp1) from Botryotinia fuckeliana (strain B05.10) (Noble rot fungus).